Consider the following 806-residue polypeptide: Conserved oligomeric Golgi complex subunit 6 (806 aa).

Belongs to the COG6 family.

The protein localises to the golgi apparatus membrane. Functionally, acts as a component of the peripheral membrane COG complex that is involved in intra-Golgi protein trafficking. COG is located at the cis-Golgi, and regulates tethering of retrograde intra-Golgi vesicles and possibly a number of other membrane trafficking events. This Eremothecium gossypii (strain ATCC 10895 / CBS 109.51 / FGSC 9923 / NRRL Y-1056) (Yeast) protein is Conserved oligomeric Golgi complex subunit 6 (COG6).